A 286-amino-acid chain; its full sequence is Large ribosomal subunit protein uL2 (286 aa).

Disordered stretches follow at residues 22–59 (KELT…GGGH) and 215–286 (LGRR…KLHK). Positions 230-240 (DHPHGGGEGRT) are enriched in basic and acidic residues. A compositionally biased stretch (basic residues) spans 255 to 286 (KGGRTRQKRKPSNSSIVRRRKSRRYGQLKLHK).

Belongs to the universal ribosomal protein uL2 family. Part of the 50S ribosomal subunit. Forms a bridge to the 30S subunit in the 70S ribosome.

Functionally, one of the primary rRNA binding proteins. Required for association of the 30S and 50S subunits to form the 70S ribosome, for tRNA binding and peptide bond formation. It has been suggested to have peptidyltransferase activity; this is somewhat controversial. Makes several contacts with the 16S rRNA in the 70S ribosome. The sequence is that of Large ribosomal subunit protein uL2 from Rhodopirellula baltica (strain DSM 10527 / NCIMB 13988 / SH1).